Consider the following 81-residue polypeptide: Omega-conotoxin-like 3 (81 aa).

The first 22 residues, 1-22 (MKLTCMMIVAVLFLTASIFITA), serve as a signal peptide directing secretion. Positions 23–51 (DNSRNGIENLPRMRRHEMKKPKASKLNKR) are excised as a propeptide. Cystine bridges form between C53–C71, C60–C75, and C70–C79.

The protein belongs to the conotoxin O1 superfamily. As to expression, expressed by the venom duct.

It is found in the secreted. Functionally, omega-conotoxins act at presynaptic membranes, they bind and block voltage-gated calcium channels (Cav). The sequence is that of Omega-conotoxin-like 3 from Conus imperialis (Imperial cone).